A 186-amino-acid chain; its full sequence is Ribosome-recycling factor (186 aa).

It belongs to the RRF family.

Its subcellular location is the cytoplasm. Responsible for the release of ribosomes from messenger RNA at the termination of protein biosynthesis. May increase the efficiency of translation by recycling ribosomes from one round of translation to another. The sequence is that of Ribosome-recycling factor from Pelodictyon phaeoclathratiforme (strain DSM 5477 / BU-1).